The chain runs to 421 residues: MSKTHLTEQKFSDFALHAKVIEALENKGFHYCTPIQALALPLTLAGRDVAGQAQTGTGKTMAFLTSAFHYLLSNPAMADRKVNQPRALIMAPTRELAVQIHADAEPLAQTTGLKLGLAYGGDGYDKQLKVLESGVDILIGTTGRLIDYAKQNHINLGAIQVVVLDEADRMYDLGFIKDIRWLFRRMPPTPQRLNMLFSATLSYRVRELAFEQMNNAEYVEVEPEQKTGHRIKEELFYPSNEEKMRLLQTLIEEEWPDRAIIFANTKHRCEDIWGHLAADGHRVGLLTGDVAQKKRLRILEDFTRGDLDILVATDVAARGLHIPAVTHVFNYDLPDDCEDYVHRIGRTGRAGASGHSISLACEEYALNLTAIETYIGHSVPQSKYNPDALLSELPPPKRLTRARSGNGPRRTGAPRNRRRPG.

The Q motif motif lies at 9–37 (QKFSDFALHAKVIEALENKGFHYCTPIQA). Positions 40–219 (LPLTLAGRDV…FEQMNNAEYV (180 aa)) constitute a Helicase ATP-binding domain. 53–60 (AQTGTGKT) contacts ATP. The short motif at 165–168 (DEAD) is the DEAD box element. The 146-residue stretch at 245 to 390 (RLLQTLIEEE…QSKYNPDALL (146 aa)) folds into the Helicase C-terminal domain. The interval 386 to 421 (PDALLSELPPPKRLTRARSGNGPRRTGAPRNRRRPG) is disordered. Residues 405-414 (GNGPRRTGAP) are compositionally biased toward low complexity.

The protein belongs to the DEAD box helicase family. RhlB subfamily. Component of the RNA degradosome, which is a multiprotein complex involved in RNA processing and mRNA degradation.

It is found in the cytoplasm. It catalyses the reaction ATP + H2O = ADP + phosphate + H(+). Its function is as follows. DEAD-box RNA helicase involved in RNA degradation. Has RNA-dependent ATPase activity and unwinds double-stranded RNA. The chain is ATP-dependent RNA helicase RhlB from Enterobacter sp. (strain 638).